A 345-amino-acid chain; its full sequence is D-fructose 1,6-bisphosphatase class 2/sedoheptulose 1,7-bisphosphatase (345 aa).

The Mn(2+) site is built by Asp33, Glu57, Asp97, and Glu100. Substrate-binding positions include 100–102 (EGT), Tyr131, 176–178 (RPR), and 198–200 (DGD). Glu225 lines the Mn(2+) pocket.

Belongs to the FBPase class 2 family. Homotetramer. Requires Mn(2+) as cofactor.

It catalyses the reaction beta-D-fructose 1,6-bisphosphate + H2O = beta-D-fructose 6-phosphate + phosphate. It carries out the reaction D-sedoheptulose 1,7-bisphosphate + H2O = D-sedoheptulose 7-phosphate + phosphate. It functions in the pathway carbohydrate biosynthesis; Calvin cycle. Its activity is regulated as follows. Inhibited by AMP and slightly innibited by hydrogen peroxyde. Functionally, catalyzes the hydrolysis of fructose 1,6-bisphosphate (Fru 1,6-P2) and sedoheptulose 1,7-bisphosphate (Sed 1,7-P2) to fructose 6-phosphate and sedoheptulose 7-phosphate, respectively. The polypeptide is D-fructose 1,6-bisphosphatase class 2/sedoheptulose 1,7-bisphosphatase (Synechococcus elongatus (strain ATCC 33912 / PCC 7942 / FACHB-805) (Anacystis nidulans R2)).